Reading from the N-terminus, the 156-residue chain is Protein-export protein SecB (156 aa).

It belongs to the SecB family. In terms of assembly, homotetramer, a dimer of dimers. One homotetramer interacts with 1 SecA dimer.

It is found in the cytoplasm. Functionally, one of the proteins required for the normal export of preproteins out of the cell cytoplasm. It is a molecular chaperone that binds to a subset of precursor proteins, maintaining them in a translocation-competent state. It also specifically binds to its receptor SecA. The protein is Protein-export protein SecB of Xanthobacter autotrophicus (strain ATCC BAA-1158 / Py2).